Consider the following 278-residue polypeptide: 4-diphosphocytidyl-2-C-methyl-D-erythritol kinase (278 aa).

K9 is an active-site residue. Residue 93–103 coordinates ATP; it reads PISAGLAGGSS. The active site involves D135.

This sequence belongs to the GHMP kinase family. IspE subfamily.

The catalysed reaction is 4-CDP-2-C-methyl-D-erythritol + ATP = 4-CDP-2-C-methyl-D-erythritol 2-phosphate + ADP + H(+). The protein operates within isoprenoid biosynthesis; isopentenyl diphosphate biosynthesis via DXP pathway; isopentenyl diphosphate from 1-deoxy-D-xylulose 5-phosphate: step 3/6. Catalyzes the phosphorylation of the position 2 hydroxy group of 4-diphosphocytidyl-2C-methyl-D-erythritol. In Finegoldia magna (strain ATCC 29328 / DSM 20472 / WAL 2508) (Peptostreptococcus magnus), this protein is 4-diphosphocytidyl-2-C-methyl-D-erythritol kinase.